The sequence spans 396 residues: Interleukin-3 receptor subunit alpha (396 aa).

Positions 1–16 (MAANLWLILGLLASHS) are cleaved as a signal peptide. Residues 17–331 (SDLAAVREAP…VCPPEVMPVK (315 aa)) lie on the Extracellular side of the membrane. 5 cysteine pairs are disulfide-bonded: cysteine 62–cysteine 79, cysteine 87–cysteine 223, cysteine 125–cysteine 134, cysteine 165–cysteine 187, and cysteine 245–cysteine 323. N-linked (GlcNAc...) asparagine glycosylation occurs at asparagine 91. N-linked (GlcNAc...) asparagine glycosylation is found at asparagine 213, asparagine 246, asparagine 272, and asparagine 283. The short motif at 312-316 (LSSWS) is the WSXWS motif element. Residues 332 to 355 (TALVTSVATVLGAGLVAAGLLLWW) form a helical membrane-spanning segment. Topologically, residues 356–396 (RKSLLYRLCPPIPRLRLPLAGEMVVWEPALEDCEVTPVTDA) are cytoplasmic. Residue lysine 357 forms a Glycyl lysine isopeptide (Lys-Gly) (interchain with G-Cter in ubiquitin) linkage. Positions 363 to 371 (LCPPIPRLR) match the Box 1 motif motif.

The protein belongs to the type I cytokine receptor family. Type 5 subfamily. In terms of assembly, interacts with IL3. Heterodimer of an alpha and a beta subunit. The beta subunit is common to the IL3, IL5 and GM-CSF receptors. Post-translationally, ubiquitinated at Lys-357 by RNFT2 in response to IL3. Ubiquitination leads ligand-induced degradation by the proteasome. Ubiquitinated by RNF128 via 'Lys-27'-linked polyubiquitination, facilitating its degradation through the lysosomal pathway.

It localises to the cell membrane. Its subcellular location is the endomembrane system. Its function is as follows. Cell surface receptor for IL3 expressed on hematopoietic progenitor cells, monocytes and B-lymphocytes that controls the production and differentiation of hematopoietic progenitor cells into lineage-restricted cells. Ligand stimulation rapidly induces hetrodimerization with IL3RB, phosphorylation and enzyme activity of effector proteins such as JAK2 and PI3K that play a role in signaling cell proliferation and differentiation. Activation of JAK2 leads to STAT5-mediated transcriptional program. The polypeptide is Interleukin-3 receptor subunit alpha (Il3ra) (Mus musculus (Mouse)).